Consider the following 554-residue polypeptide: MAFYRTPHDVTALPAWKALQQHREAMRGFSMSEAFAADAKRFDQFSLSACGLFLDYSKNLITEQSRDLLVNLANEVGLQDAIKSMFSGEIINASEGRPVLHTALRRPVGDKLSVNGVNVMPEVHKVLNQITELVGRIHDGLWRGYSEKPITDVVNIGIGGSFLGPELVSEALLPYAQRGVRCHYLANIDGSEFHELSANLRAETTLFIVSSKSFNTLETLKNAMAARTWYLAQGGSEAELYRHFIAVSSNKAAAVAFGIREENIFPMWDWVGGRYSLWSAIGLPIALAIGTANFKELLSGAYTMDQHFQTAPFDKNMPVLLALLGVWYGNFWDANSHAILPYDHYLRNITKHLQQLDMESNGKSVLQDGTPVKTDTGPVIWGGVGCNGQHAYHQLLHQGTQLIPADFIVPVVSFNPVADHHQWLYANCLSQSQALMLGKTREEAEAELRAKGLNEADIEKLAPHKVIPGNRPSNTLVVERISPRRLGALVAMYEHKVFVQSVIWGINAFDQWGVELGKELGKSVYQRLVGSLEDSAEDGSTQGLINYFRGKHRG.

Catalysis depends on glutamate 359, which acts as the Proton donor. Active-site residues include histidine 390 and lysine 518.

The protein belongs to the GPI family.

Its subcellular location is the cytoplasm. It catalyses the reaction alpha-D-glucose 6-phosphate = beta-D-fructose 6-phosphate. The protein operates within carbohydrate biosynthesis; gluconeogenesis. It participates in carbohydrate degradation; glycolysis; D-glyceraldehyde 3-phosphate and glycerone phosphate from D-glucose: step 2/4. Its function is as follows. Catalyzes the reversible isomerization of glucose-6-phosphate to fructose-6-phosphate. This Pseudomonas putida (strain ATCC 47054 / DSM 6125 / CFBP 8728 / NCIMB 11950 / KT2440) protein is Glucose-6-phosphate isomerase 1.